The primary structure comprises 140 residues: Nucleoside diphosphate kinase (140 aa).

Residues Lys-11, Phe-59, Arg-87, Thr-93, Arg-104, and Asn-114 each contribute to the ATP site. His-117 (pros-phosphohistidine intermediate) is an active-site residue.

This sequence belongs to the NDK family. As to quaternary structure, homotetramer. Mg(2+) serves as cofactor.

The protein resides in the cytoplasm. It carries out the reaction a 2'-deoxyribonucleoside 5'-diphosphate + ATP = a 2'-deoxyribonucleoside 5'-triphosphate + ADP. It catalyses the reaction a ribonucleoside 5'-diphosphate + ATP = a ribonucleoside 5'-triphosphate + ADP. Major role in the synthesis of nucleoside triphosphates other than ATP. The ATP gamma phosphate is transferred to the NDP beta phosphate via a ping-pong mechanism, using a phosphorylated active-site intermediate. The protein is Nucleoside diphosphate kinase of Bradyrhizobium diazoefficiens (strain JCM 10833 / BCRC 13528 / IAM 13628 / NBRC 14792 / USDA 110).